Here is a 1118-residue protein sequence, read N- to C-terminus: Ubiquitin carboxyl-terminal hydrolase 8 (1118 aa).

Residues 33 to 116 (TKSYVHSALK…ESLKLRYEEA (84 aa)) form the MIT domain. Composition is skewed to basic and acidic residues over residues 120–146 (KKLE…REDG) and 158–177 (LDSK…KCET). Residues 120 to 177 (KKLEEKDRQEEAQRLQQKRQETGREDGGTLAKGSLENVLDSKDKTQKSNGEKNEKCET) form a disordered region. Ser160 bears the Phosphoserine mark. The region spanning 195–313 (KNISLIIMDA…WLLCYPQYTT (119 aa)) is the Rhodanese domain. Phosphoserine occurs at positions 392 and 400. The segment at 402–447 (KNVPQIDRTKKPAVKLPEEHRIKSESTNHEQQSPQSGKVIPDRSTK) is disordered. Positions 405–413 (PQIDRTKKP) match the SH3-binding motif. Basic and acidic residues predominate over residues 417 to 429 (LPEEHRIKSESTN). A Phosphoserine modification is found at Ser452. A compositionally biased stretch (basic and acidic residues) spans 475–573 (KNKQEKELRE…AKKSVEDRGK (99 aa)). Disordered stretches follow at residues 475–648 (KNKQ…GRIV) and 679–746 (YPPE…ENKP). Thr577 is modified (phosphothreonine). The segment covering 618 to 645 (TFREDTDDTERNKAQREPLTRARSEEMG) has biased composition (basic and acidic residues). The segment covering 716–726 (SYSSPDITQAI) has biased composition (polar residues). Phosphoserine occurs at positions 718 and 719. The region spanning 777–1109 (TGLRNLGNTC…AAYILFYTSL (333 aa)) is the USP domain. Cys786 functions as the Nucleophile in the catalytic mechanism. Thr945 carries the phosphothreonine modification. The Proton acceptor role is filled by His1067.

Belongs to the peptidase C19 family. In terms of assembly, forms a ternary complex with RNF128 and OTUB1. Interacts (via C-terminal UCH catalytic domain) with OTUB1 isoform 1. Interacts with STAM2 (via SH3 domain). Interacts with DNAJB3, EGFR, EPS15, RASGRF1, RNF41, YWHAE, YWHAG and YWHAZ. Interacts with NBR1, RASGRF1, RNF41 and IST1. Associates with the ESCRT-0 complex and with microtubules. Interacts with BIRC6/bruce and KIF23/MKLP1. (Microbial infection) Interacts with Zika virus non-structural protein 1. Phosphorylation of Ser-718 is essential for interaction with YWHAE and for cytosol localization. Undergoes dephosphorylation at Ser-718 in the M phase. Tyrosine-phosphorylated in its N-terminal half in an EGFR-dependent manner. In terms of processing, ubiquitinated. Inactive form is mostly monoubiquitinated, but polyubiquitination happens too. Ubiquitination is increased in EGF-stimulated cells. Ubiquitination of active form is undetectable, suggesting a possibility that USP8 deubiquitinates itself, thereby regulating its own function.

The protein localises to the cytoplasm. It localises to the nucleus. Its subcellular location is the endosome membrane. It is found in the cell membrane. It catalyses the reaction Thiol-dependent hydrolysis of ester, thioester, amide, peptide and isopeptide bonds formed by the C-terminal Gly of ubiquitin (a 76-residue protein attached to proteins as an intracellular targeting signal).. Hydrolase that can remove conjugated ubiquitin from proteins and therefore plays an important regulatory role at the level of protein turnover by preventing degradation. Converts both 'Lys-48' an 'Lys-63'-linked ubiquitin chains. Catalytic activity is enhanced in the M phase. Involved in cell proliferation. Required to enter into S phase in response to serum stimulation. May regulate T-cell anergy mediated by RNF128 via the formation of a complex containing RNF128 and OTUB1. Probably regulates the stability of STAM2 and RASGRF1. Regulates endosomal ubiquitin dynamics, cargo sorting, membrane traffic at early endosomes, and maintenance of ESCRT-0 stability. The level of protein ubiquitination on endosomes is essential for maintaining the morphology of the organelle. Deubiquitinates EPS15 and controls tyrosine kinase stability. Removes conjugated ubiquitin from EGFR thus regulating EGFR degradation and downstream MAPK signaling. Involved in acrosome biogenesis through interaction with the spermatid ESCRT-0 complex and microtubules. Deubiquitinates BIRC6/bruce and KIF23/MKLP1. Deubiquitinates BACE1 which inhibits BACE1 lysosomal degradation and modulates BACE-mediated APP cleavage and amyloid-beta formation. This is Ubiquitin carboxyl-terminal hydrolase 8 from Homo sapiens (Human).